Reading from the N-terminus, the 460-residue chain is G-protein coupled receptor 22 (460 aa).

The Cytoplasmic segment spans residues 1-74 (MESMPSSLTH…YPVSFQVSLT (74 aa)). The chain crosses the membrane as a helical span at residues 75-95 (GFLMLEIVLGLSSNLTVLALY). Topologically, residues 96–114 (CMKSNLVSSVSNIVTMNLH) are extracellular. Residues 115–135 (VLDVLVCVGCIPLTIVVVLLP) form a helical membrane-spanning segment. Residues 136–144 (LEGNNALIC) are Cytoplasmic-facing. Residues 145–165 (CFHEACVSFASVATAANVLAI) traverse the membrane as a helical segment. Residues 166–185 (TLDRYDISVRPANRVLTMGR) are Extracellular-facing. A helical transmembrane segment spans residues 186–206 (AVALLGSIWALSFFSFLVPFI). Residues 207–235 (EEGFFSQAGNERNQTEAEEPSNEYYTELG) lie on the Cytoplasmic side of the membrane. Residues 236–256 (LYYHLLAQIPIFFFTAVVMLV) form a helical membrane-spanning segment. Residues 257–343 (TYYKILQALN…ERQKRVFRMS (87 aa)) are Extracellular-facing. Residues 276-286 (VPKKKPRKKKT) are compositionally biased toward basic residues. The tract at residues 276–309 (VPKKKPRKKKTISMTSTQPESTDASQSSAGRNAP) is disordered. Over residues 287–305 (ISMTSTQPESTDASQSSAG) the composition is skewed to polar residues. Residues 344-364 (LLIISTFLLCWTPITVLNTVI) traverse the membrane as a helical segment. The Cytoplasmic segment spans residues 365–377 (LSVGPSNFTVRLR). A helical transmembrane segment spans residues 378-398 (LGFLVMAYGTTIFHPLLYAFT). Topologically, residues 399–460 (RQKFQKVLKS…QKCLSSEDVE (62 aa)) are extracellular.

The protein belongs to the G-protein coupled receptor 1 family.

The protein localises to the cell membrane. Functionally, orphan G-protein coupled receptor that regulates cilia length and structure in the Kupffer's vesicle leading to the left-right asymmetry development by establishing a directional fluid flow. The polypeptide is G-protein coupled receptor 22 (gpr22a) (Danio rerio (Zebrafish)).